The sequence spans 311 residues: Progestin and adipoQ receptor family member 3 (311 aa).

Residues 1-20 (MHQKLLKSAHYIELGSYQYW) form a required for interaction with SREBF2 region. The Cytoplasmic portion of the chain corresponds to 1–70 (MHQKLLKSAH…KSLFILSNET (70 aa)). Residues 41 to 60 (KDNPYITDGYRAYLPSRLCI) are required for interaction with SCAP. Positions 61–71 (KSLFILSNETV) are golgi targeting. A helical transmembrane segment spans residues 71 to 91 (VNIWSHLLGFFLFFTLGIYDM). Over 92-104 (TSVLPSASASRED) the chain is Lumenal. Residues 105–125 (FVICSICLFCFQVCMLCSVGY) form a helical membrane-spanning segment. Residues 126-145 (HLFSCHRSEKTCRRWMALDY) are Cytoplasmic-facing. A helical transmembrane segment spans residues 146–166 (AGISIGILGCYVSGVFYAFYC). Residues 167–172 (NNYWRQ) lie on the Lumenal side of the membrane. The chain crosses the membrane as a helical span at residues 173 to 193 (VYLITVLAMILAVFFAQIHPS). The Cytoplasmic segment spans residues 194-203 (YLTQQWQRLR). A helical membrane pass occupies residues 204 to 224 (PIIFCSVSGYGVIPTLHWVWL). Topologically, residues 225-235 (NGGVSAPIVQD) are lumenal. The helical transmembrane segment at 236-256 (FAPRVIVMYVIALLAFLFYIS) threads the bilayer. Over 257-275 (KVPERYFPGQLNYLGSSHQ) the chain is Cytoplasmic. Residues 276–296 (IWHVLAVVMLYWWHQSTVYVM) traverse the membrane as a helical segment. Residues 297–311 (QYRHSKPCPDYVSHL) lie on the Lumenal side of the membrane. Residues 299–303 (RHSKP) are golgi targeting.

Belongs to the ADIPOR family. In terms of assembly, interacts with SCAP and SREBF2; the interactions are direct, increase in low cholesterol conditions and tether SCAP:SREBP complex to the Golgi apparatus. Interaction with SCAP is mutually exclusive with INSIG1. In hepatocytes, interacts with PPARA and HUWE1; the interactions promote PPARA poylubiquitination and HUWE1-mediated degradation. In macrophages, interacts with PPARG and STUB1; the interactions promote PPARG poylubiquitination and STUB1-mediated degradation.

The protein localises to the golgi apparatus membrane. In terms of biological role, golgi-anchored protein which modulates its interactors acitivies by tethering them to the Golgi apparatus. Functions as a spatial regulator of RAF1 kinase by sequestrating it to the Golgi apparatus. Acts as a positive regulator of cholesterol biosynthesis by mediating the anchoring of the SCAP:SREBP complex in the Golgi apparatus, thereby promoting SCAP:SREBF2 complex formation, potentiating SREBF2 and SREBF1 processing and enhancing lipid synthesis. Also regulates PPARA and PPARG functions by mediating their interaction with E3 ubiquitin ligases, such as STUB1 or HUWE1, leading to their polyubiquitination and proteasome-mediated degradation. This Mus musculus (Mouse) protein is Progestin and adipoQ receptor family member 3.